A 364-amino-acid chain; its full sequence is UDP-3-O-acylglucosamine N-acyltransferase (364 aa).

The active-site Proton acceptor is His257.

It belongs to the transferase hexapeptide repeat family. LpxD subfamily. As to quaternary structure, homotrimer.

The catalysed reaction is a UDP-3-O-[(3R)-3-hydroxyacyl]-alpha-D-glucosamine + a (3R)-hydroxyacyl-[ACP] = a UDP-2-N,3-O-bis[(3R)-3-hydroxyacyl]-alpha-D-glucosamine + holo-[ACP] + H(+). The protein operates within bacterial outer membrane biogenesis; LPS lipid A biosynthesis. Catalyzes the N-acylation of UDP-3-O-acylglucosamine using 3-hydroxyacyl-ACP as the acyl donor. Is involved in the biosynthesis of lipid A, a phosphorylated glycolipid that anchors the lipopolysaccharide to the outer membrane of the cell. The sequence is that of UDP-3-O-acylglucosamine N-acyltransferase from Paracoccus denitrificans (strain Pd 1222).